Consider the following 623-residue polypeptide: Glutathione import ATP-binding protein GsiA (623 aa).

ABC transporter domains follow at residues 15 to 269 and 314 to 564; these read VENL…RALL and LRVR…RKLL. ATP contacts are provided by residues 49-56 and 357-364; these read GESGSGKS.

Belongs to the ABC transporter superfamily. Glutathione importer (TC 3.A.1.5.11) family. In terms of assembly, the complex is composed of two ATP-binding proteins (GsiA), two transmembrane proteins (GsiC and GsiD) and a solute-binding protein (GsiB).

The protein resides in the cell inner membrane. The enzyme catalyses glutathione(out) + ATP + H2O = glutathione(in) + ADP + phosphate + H(+). Its function is as follows. Part of the ABC transporter complex GsiABCD involved in glutathione import. Responsible for energy coupling to the transport system. In Escherichia coli O157:H7, this protein is Glutathione import ATP-binding protein GsiA.